Consider the following 347-residue polypeptide: Geranylgeranyl pyrophosphate synthase 7, chloroplastic (347 aa).

Residues 1 to 39 (MTTLNLSIFPSVKISSSASIPGFIKIQPFLLRRKLSTVL) constitute a chloroplast transit peptide. Residues Lys-95, Arg-98, and His-127 each contribute to the isopentenyl diphosphate site. 2 residues coordinate Mg(2+): Asp-134 and Asp-140. Residue Arg-145 participates in dimethylallyl diphosphate binding. An isopentenyl diphosphate-binding site is contributed by Arg-146. Lys-232, Thr-233, Gln-270, Lys-287, and Lys-297 together coordinate dimethylallyl diphosphate.

It belongs to the FPP/GGPP synthase family. As to quaternary structure, monomer. Mg(2+) is required as a cofactor.

It localises to the plastid. The protein localises to the chloroplast. It carries out the reaction isopentenyl diphosphate + dimethylallyl diphosphate = (2E)-geranyl diphosphate + diphosphate. It catalyses the reaction isopentenyl diphosphate + (2E)-geranyl diphosphate = (2E,6E)-farnesyl diphosphate + diphosphate. The enzyme catalyses isopentenyl diphosphate + (2E,6E)-farnesyl diphosphate = (2E,6E,10E)-geranylgeranyl diphosphate + diphosphate. It functions in the pathway isoprenoid biosynthesis; farnesyl diphosphate biosynthesis; farnesyl diphosphate from geranyl diphosphate and isopentenyl diphosphate: step 1/1. Its pathway is isoprenoid biosynthesis; geranyl diphosphate biosynthesis; geranyl diphosphate from dimethylallyl diphosphate and isopentenyl diphosphate: step 1/1. The protein operates within isoprenoid biosynthesis; geranylgeranyl diphosphate biosynthesis; geranylgeranyl diphosphate from farnesyl diphosphate and isopentenyl diphosphate: step 1/1. Functionally, catalyzes the trans-addition of the three molecules of IPP onto DMAPP to form geranylgeranyl pyrophosphate. This chain is Geranylgeranyl pyrophosphate synthase 7, chloroplastic, found in Arabidopsis thaliana (Mouse-ear cress).